The following is a 103-amino-acid chain: Host transcription reprogramming factor 6 (103 aa).

Residues methionine 1–alanine 19 form the signal peptide. A C2H2-type zinc finger spans residues tyrosine 66 to histidine 92. Residues glutamate 82–glutamine 103 form a disordered region.

Its subcellular location is the secreted. It is found in the host nucleus. Probable secreted effector that translocates into the nuclei of host cells to reprogram the expression of targeted genes by binding on effector binding elements in rice. This chain is Host transcription reprogramming factor 6, found in Pyricularia oryzae (strain 70-15 / ATCC MYA-4617 / FGSC 8958) (Rice blast fungus).